A 431-amino-acid polypeptide reads, in one-letter code: UPF0597 protein BVU_2091 (431 aa).

Belongs to the UPF0597 family.

This chain is UPF0597 protein BVU_2091, found in Phocaeicola vulgatus (strain ATCC 8482 / DSM 1447 / JCM 5826 / CCUG 4940 / NBRC 14291 / NCTC 11154) (Bacteroides vulgatus).